Here is a 174-residue protein sequence, read N- to C-terminus: ATP synthase subunit delta (174 aa).

This sequence belongs to the ATPase delta chain family. F-type ATPases have 2 components, F(1) - the catalytic core - and F(0) - the membrane proton channel. F(1) has five subunits: alpha(3), beta(3), gamma(1), delta(1), epsilon(1). F(0) has three main subunits: a(1), b(2) and c(10-14). The alpha and beta chains form an alternating ring which encloses part of the gamma chain. F(1) is attached to F(0) by a central stalk formed by the gamma and epsilon chains, while a peripheral stalk is formed by the delta and b chains.

The protein resides in the cell inner membrane. Functionally, f(1)F(0) ATP synthase produces ATP from ADP in the presence of a proton or sodium gradient. F-type ATPases consist of two structural domains, F(1) containing the extramembraneous catalytic core and F(0) containing the membrane proton channel, linked together by a central stalk and a peripheral stalk. During catalysis, ATP synthesis in the catalytic domain of F(1) is coupled via a rotary mechanism of the central stalk subunits to proton translocation. In terms of biological role, this protein is part of the stalk that links CF(0) to CF(1). It either transmits conformational changes from CF(0) to CF(1) or is implicated in proton conduction. This chain is ATP synthase subunit delta, found in Helicobacter hepaticus (strain ATCC 51449 / 3B1).